The chain runs to 288 residues: ATP synthase gamma chain (288 aa).

This sequence belongs to the ATPase gamma chain family. In terms of assembly, F-type ATPases have 2 components, CF(1) - the catalytic core - and CF(0) - the membrane proton channel. CF(1) has five subunits: alpha(3), beta(3), gamma(1), delta(1), epsilon(1). CF(0) has three main subunits: a, b and c.

It is found in the cell inner membrane. Functionally, produces ATP from ADP in the presence of a proton gradient across the membrane. The gamma chain is believed to be important in regulating ATPase activity and the flow of protons through the CF(0) complex. This is ATP synthase gamma chain from Chromobacterium violaceum (strain ATCC 12472 / DSM 30191 / JCM 1249 / CCUG 213 / NBRC 12614 / NCIMB 9131 / NCTC 9757 / MK).